The primary structure comprises 642 residues: 1-deoxy-D-xylulose-5-phosphate synthase 2 (642 aa).

Residues His-79 and 120–122 (AHS) each bind thiamine diphosphate. Asp-155 contacts Mg(2+). Thiamine diphosphate is bound by residues 156–157 (GS), Asn-184, Tyr-293, and Glu-375. A Mg(2+)-binding site is contributed by Asn-184.

The protein belongs to the transketolase family. DXPS subfamily. In terms of assembly, homodimer. It depends on Mg(2+) as a cofactor. Requires thiamine diphosphate as cofactor.

It catalyses the reaction D-glyceraldehyde 3-phosphate + pyruvate + H(+) = 1-deoxy-D-xylulose 5-phosphate + CO2. It functions in the pathway metabolic intermediate biosynthesis; 1-deoxy-D-xylulose 5-phosphate biosynthesis; 1-deoxy-D-xylulose 5-phosphate from D-glyceraldehyde 3-phosphate and pyruvate: step 1/1. Its function is as follows. Catalyzes the acyloin condensation reaction between C atoms 2 and 3 of pyruvate and glyceraldehyde 3-phosphate to yield 1-deoxy-D-xylulose-5-phosphate (DXP). This Roseobacter denitrificans (strain ATCC 33942 / OCh 114) (Erythrobacter sp. (strain OCh 114)) protein is 1-deoxy-D-xylulose-5-phosphate synthase 2.